The primary structure comprises 477 residues: Glycogen synthase (477 aa).

Lysine 15 is a binding site for ADP-alpha-D-glucose.

This sequence belongs to the glycosyltransferase 1 family. Bacterial/plant glycogen synthase subfamily.

The catalysed reaction is [(1-&gt;4)-alpha-D-glucosyl](n) + ADP-alpha-D-glucose = [(1-&gt;4)-alpha-D-glucosyl](n+1) + ADP + H(+). The protein operates within glycan biosynthesis; glycogen biosynthesis. Synthesizes alpha-1,4-glucan chains using ADP-glucose. This is Glycogen synthase from Escherichia coli O139:H28 (strain E24377A / ETEC).